Reading from the N-terminus, the 211-residue chain is MAIHNLACVRDERQLFSGLNEEFAPGDGVQIEGSNGAGKTLLLRILAGLTPPDAGEIRWRQRPLRQCRSDYYRELVYIGHRAAIKPVLTPRENLTFYQGITGLRNDYAIYRALEQVGLLGYEDVRAAGLSAGQQQRIALARLWLTSASLWILDEPLTAIDHQGAQALVRLFEQHCATGGMVIMTTHQPLPASRYRMRKVALRMAEATSCFG.

Residues 1-211 (MAIHNLACVR…RMAEATSCFG (211 aa)) form the ABC transporter domain. 33 to 40 (GSNGAGKT) contacts ATP.

Belongs to the ABC transporter superfamily. CcmA exporter (TC 3.A.1.107) family. As to quaternary structure, the complex is composed of two ATP-binding proteins (CcmA) and two transmembrane proteins (CcmB).

It is found in the cell inner membrane. It catalyses the reaction heme b(in) + ATP + H2O = heme b(out) + ADP + phosphate + H(+). Part of the ABC transporter complex CcmAB involved in the biogenesis of c-type cytochromes; once thought to export heme, this seems not to be the case, but its exact role is uncertain. Responsible for energy coupling to the transport system. The protein is Cytochrome c biogenesis ATP-binding export protein CcmA of Sodalis glossinidius (strain morsitans).